A 113-amino-acid polypeptide reads, in one-letter code: U11-theraphotoxin-Hhn1p (113 aa).

The signal sequence occupies residues 1 to 21 (MNTVRVTFLLVFVLAVSLGQA). Residues 22–74 (DKDENRMEMQEKTEQGKSYLDFAENLLLQKLEELEAKLLEEDSEESRNSRQKR) constitute a propeptide that is removed on maturation. The interval 61–83 (EEDSEESRNSRQKRCIGEGVPCD) is disordered. 3 cysteine pairs are disulfide-bonded: cysteine 75-cysteine 90, cysteine 82-cysteine 95, and cysteine 89-cysteine 110.

It belongs to the neurotoxin 14 (magi-1) family. 01 (HNTX-16) subfamily. As to expression, expressed by the venom gland.

The protein resides in the secreted. Its function is as follows. Probable ion channel inhibitor. The sequence is that of U11-theraphotoxin-Hhn1p from Cyriopagopus hainanus (Chinese bird spider).